A 287-amino-acid chain; its full sequence is rRNA adenine N-6-methyltransferase (287 aa).

Over residues Met1–Leu13 the composition is skewed to basic residues. The interval Met1–Phe21 is disordered. The S-adenosyl-L-methionine site is built by His25, Met27, Gly52, Glu73, Asp98, and Asn114.

This sequence belongs to the class I-like SAM-binding methyltransferase superfamily. rRNA adenine N(6)-methyltransferase family.

Its function is as follows. Involved in erythromycin resistance. The polypeptide is rRNA adenine N-6-methyltransferase (ermD) (Bacillus licheniformis).